Here is a 688-residue protein sequence, read N- to C-terminus: Collagen alpha-2(IX) chain (688 aa).

The N-terminal stretch at 1–22 (MAPAADPRSLLVLLQVLGLALA) is a signal peptide. A triple-helical region 4 (COL4) region spans residues 26–162 (GLPGEPGPPG…PGKPGRPGTI (137 aa)). 3 disordered regions span residues 26–520 (GLPG…RDAS), 549–578 (GATG…PGPR), and 590–662 (IGNT…LPGF). Composition is skewed to pro residues over residues 30–42 (EPGP…PPGV) and 105–126 (LPGP…PGPV). Residues 128–138 (LPGEIGLTGPK) are compositionally biased toward low complexity. The span at 143 to 156 (PEGPSGPPGPPGKP) shows a compositional bias: pro residues. 4-hydroxyproline is present on proline 159. Residues 163-179 (QGLEGSADFLCPTNCPA) are nonhelical region 4 (NC4). Serine 168 is a glycosylation site (O-linked (Xyl...) (glycosaminoglycan) serine). Residues 180-518 (GVKGPPGLQG…PGRQGVAGRD (339 aa)) form a triple-helical region 3 (COL3) region. Lysine 182 is subject to 5-hydroxylysine. Lysine 182 carries O-linked (Gal...) hydroxylysine glycosylation. 2 stretches are compositionally biased toward low complexity: residues 251–265 (KGMV…SPGE) and 394–412 (PVGQ…EQGP). Residues 435 to 444 (GPRGGVGDPG) are compositionally biased toward gly residues. The segment covering 497 to 506 (RGLVGDRGLP) has biased composition (low complexity). Residues 519 to 548 (ASDQHIEDVVLKMLQEQLAEMAVSAKREAL) form a nonhelical region 3 (NC3) region. The tract at residues 549 to 631 (GATGMMGPPG…PGLPGRPGQA (83 aa)) is triple-helical region 2 (COL2). Over residues 556 to 565 (PPGPPGPPGY) the composition is skewed to pro residues. Basic and acidic residues predominate over residues 598–610 (KRGEKGDQGEVGR). Positions 632 to 633 (IN) are nonhelical region 2 (NC2). Residues 634–663 (GKDGDRGAPGAPGEAGRPGLPGPIGLPGFC) form a triple-helical region 1 (COL1) region. Over residues 641-651 (APGAPGEAGRP) the composition is skewed to low complexity. Residues 664–688 (EPAACLGASAYASGRLTEPGSIKGP) form a nonhelical region 1 (NC1) region.

Belongs to the fibril-associated collagens with interrupted helices (FACIT) family. In terms of assembly, heterotrimer of an alpha 1(IX), an alpha 2(IX) and an alpha 3(IX) chain. The chains are linked to each other by interchain disulfide bonds. Trimers are also cross-linked via hydroxylysines. Post-translationally, prolines at the third position of the tripeptide repeating unit (G-X-Y) are hydroxylated in some or all of the chains. Covalently linked to the telopeptides of type II collagen by hydroxylysine-derived cross-links.

Its subcellular location is the secreted. It localises to the extracellular space. The protein resides in the extracellular matrix. In terms of biological role, structural component of hyaline cartilage and vitreous of the eye. This is Collagen alpha-2(IX) chain from Bos taurus (Bovine).